The following is a 220-amino-acid chain: Elongation factor Ts, chloroplastic (220 aa).

This sequence belongs to the EF-Ts family.

Its subcellular location is the plastid. The protein localises to the chloroplast. Associates with the EF-Tu.GDP complex and induces the exchange of GDP to GTP. It remains bound to the aminoacyl-tRNA.EF-Tu.GTP complex up to the GTP hydrolysis stage on the ribosome. The chain is Elongation factor Ts, chloroplastic (tsf) from Pyropia yezoensis (Susabi-nori).